A 352-amino-acid polypeptide reads, in one-letter code: C-C chemokine receptor type 5 (352 aa).

Over 1–30 (MDYQVSSPIYDINYYTSEPCQKINVKQIAA) the chain is Extracellular. The residue at position 3 (Tyr3) is a Sulfotyrosine. Residues Ser6 and Ser7 are each glycosylated (O-linked (GalNAc...) serine). A sulfotyrosine mark is found at Tyr10, Tyr14, and Tyr15. Cystine bridges form between Cys20/Cys269 and Cys101/Cys178. Residues 31-58 (RLLPPLYSLVFIFGFVGNMLVILILINC) traverse the membrane as a helical segment. The Cytoplasmic segment spans residues 59-68 (KRLKSMTDIY). A helical transmembrane segment spans residues 69-89 (LLNLAISDLFFLLTVPFWAHY). Residues 90-102 (AAAQWDFGNTMCQ) lie on the Extracellular side of the membrane. A helical transmembrane segment spans residues 103-124 (LLTGLYFIGFFSGIFFIILLTI). Over 125–141 (DRYLAVVHAVFALKART) the chain is Cytoplasmic. Residues 142-166 (VTFGVVTSVITWVVAVFASLPGIIF) traverse the membrane as a helical segment. Residues 167–198 (TRSQKEGLHYTCSSHFPYSQYQFWKNFQTLKI) lie on the Extracellular side of the membrane. The chain crosses the membrane as a helical span at residues 199–218 (VILGLVLPLLVMVICYSGIL). The Cytoplasmic segment spans residues 219-235 (KTLLRCRNEKKRHRAVR). Residues 236–260 (LIFTIMIVYFLFWAPYNIVLLLNTF) traverse the membrane as a helical segment. The Extracellular segment spans residues 261–277 (QEFFGLNNCSSSNRLDQ). Residues 278 to 301 (AMQVTETLGMTHCCINPIIYAFVG) traverse the membrane as a helical segment. Topologically, residues 302-352 (EKFRNYLLVFFQKHIAKRFCKCCSIFQQEAPERASSVYTRSTGEQEISVGL) are cytoplasmic. 3 S-palmitoyl cysteine lipidation sites follow: Cys321, Cys323, and Cys324. Residues Ser336, Ser337, Ser342, and Ser349 each carry the phosphoserine; by BARK1 modification.

This sequence belongs to the G-protein coupled receptor 1 family. Interacts with PRAF2. Efficient ligand binding to CCL3/MIP-1alpha and CCL4/MIP-1beta requires sulfation, O-glycosylation and sialic acid modifications. Glycosylation on Ser-6 is required for efficient binding of CCL4. Interacts with GRK2. Interacts with ARRB1 and ARRB2. Interacts with CNIH4. Interacts with S100A4; this interaction stimulates T-lymphocyte chemotaxis. In terms of assembly, (Microbial infection) Interacts with HIV-1 surface protein gp120. As to quaternary structure, (Microbial infection) May interact with human cytomegalovirus/HHV-5 protein UL78. Post-translationally, sulfated on at least 2 of the N-terminal tyrosines. Sulfation contributes to the efficiency of HIV-1 entry and is required for efficient binding of the chemokines, CCL3 and CCL4. In terms of processing, O-glycosylated, but not N-glycosylated. Ser-6 appears to be the major site even if Ser-7 may be also O-glycosylated. Also sialylated glycans present which contribute to chemokine binding. Thr-16 and Ser-17 may also be glycosylated and, if so, with small moieties such as a T-antigen. Palmitoylation in the C-terminal is important for cell surface expression, and to a lesser extent, for HIV entry. Post-translationally, phosphorylation on serine residues in the C-terminal is stimulated by binding CC chemokines especially by APO-RANTES. Highly expressed in spleen, thymus, in the myeloid cell line THP-1, in the promyeloblastic cell line KG-1a and on CD4+ and CD8+ T-cells. Medium levels in peripheral blood leukocytes and in small intestine. Low levels in ovary and lung.

It is found in the cell membrane. Functionally, receptor for a number of inflammatory CC-chemokines including CCL3/MIP-1-alpha, CCL4/MIP-1-beta and RANTES and subsequently transduces a signal by increasing the intracellular calcium ion level. May play a role in the control of granulocytic lineage proliferation or differentiation. Participates in T-lymphocyte migration to the infection site by acting as a chemotactic receptor. In terms of biological role, (Microbial infection) Acts as a coreceptor (CD4 being the primary receptor) of human immunodeficiency virus-1/HIV-1. This Homo sapiens (Human) protein is C-C chemokine receptor type 5.